The chain runs to 586 residues: MSANPRWDISRALGVAKLFHLVCGVREACVTPFLTLYLRQLGLAAPWVGTLMGTKHLIAAFWAPVCAFLAKSYRKRRALLIGSLLGSVGASLLMVLVPPVDKNRVHFPCNGSSGLTSTDALPGVTLPVNITSAQESASSHPAKRTAEVEMPGFRNPPGESDRETFRDLHVYLAPSVEGARTTSQALLHPVTSGLKDHPWEVTFEVVKTALPLLPGGKGPGNPANLSGTKGKAWAFDLSLEALRRTFILSLGSVAFWELLTAPLEQVADDSLYEFLDFVDATDRYRSLWVWRLLGMSAGVCGITALVGQLDCFLMTSGPRGVVHFYGYSVVSTLALLVSIAFPIPICQQWEPSYKRVKALSIVGGDPHLILLASTTVLVGAIVSTVQNFLFWHMKDHGSGELVMGFSVALSLLGEILLHPFKATLLRKLSRTGLVGLGLSCLAGQLLYYSFLWSWWSVLPIQILSAISNRALWWAVGASVEDLATPRMERALSALFRGHFYGSGCSLGSFVGGFVVMRFSLAVLYQACCVALLLWLALLLSIQRRLPRERKIKYSKLLSMEVSDTSDSEQGTEQDWLVKAMREEHSD.

The next 2 helical transmembrane spans lie at 50–70 (TLMG…AFLA) and 78–98 (ALLI…VLVP). Residues 133–160 (AQESASSHPAKRTAEVEMPGFRNPPGES) form a disordered region. Helical transmembrane passes span 246-266 (FILS…LEQV), 287-307 (LWVW…ALVG), 326-346 (GYSV…IPIC), 361-381 (IVGG…VGAI), 400-420 (ELVM…LHPF), 433-455 (LVGL…WSWW), 456-476 (SVLP…WAVG), 499-519 (FYGS…MRFS), and 521-541 (AVLY…LLSI).

It belongs to the major facilitator superfamily. MFSD6 family.

It is found in the membrane. In Homo sapiens (Human), this protein is Major facilitator superfamily domain-containing protein 6-like (MFSD6L).